We begin with the raw amino-acid sequence, 884 residues long: Probable leucine-rich repeat receptor-like protein kinase At2g28990 (884 aa).

An N-terminal signal peptide occupies residues 1-19; the sequence is MKIHLLLAMIGTFVVIIGA. Residues 20–508 are Extracellular-facing; sequence QDQEGFISLD…TEKKNKFLLP (489 aa). N-linked (GlcNAc...) asparagine glycosylation is found at N70, N177, N217, N231, N251, N284, N298, N334, N418, N427, N438, N459, and N464. LRR repeat units lie at residues 404–427, 428–451, and 452–476; these read SPTIISLDLSKSGLNGSIPQILQN, FTQLQELDLSNNSLTGPVPIFLAN, and MKTLSLINLSGNNLSGSVPQALLDK. A helical membrane pass occupies residues 509–529; that stretch reads VIASAASLVIVVVVVALFFVF. Residues 530 to 884 are Cytoplasmic-facing; the sequence is RKKKASPSNL…IYNEVIPQAR (355 aa). The disordered stretch occupies residues 535 to 559; the sequence is SPSNLHAPPSMPVSNPGHNSQSESS. A compositionally biased stretch (polar residues) spans 546–559; that stretch reads PVSNPGHNSQSESS. T568 carries the post-translational modification Phosphothreonine. The region spanning 577-850 is the Protein kinase domain; the sequence is NNFDKALGEG…RVVNELKECL (274 aa). Residues 583 to 591 and K605 contribute to the ATP site; that span reads LGEGGFGVV. Y650 carries the post-translational modification Phosphotyrosine. The Proton acceptor role is filled by D702. Residue S736 is modified to Phosphoserine. Residues T737 and T742 each carry the phosphothreonine modification. The residue at position 750 (Y750) is a Phosphotyrosine.

This sequence belongs to the protein kinase superfamily. Ser/Thr protein kinase family. Binds to the ammonium transporter AMT1-1.

The protein resides in the membrane. It carries out the reaction L-seryl-[protein] + ATP = O-phospho-L-seryl-[protein] + ADP + H(+). The catalysed reaction is L-threonyl-[protein] + ATP = O-phospho-L-threonyl-[protein] + ADP + H(+). The sequence is that of Probable leucine-rich repeat receptor-like protein kinase At2g28990 from Arabidopsis thaliana (Mouse-ear cress).